The chain runs to 467 residues: Glutamate--tRNA ligase (467 aa).

Positions 9 to 19 match the 'HIGH' region motif; that stretch reads PSPTGYLHIGG. The 'KMSKS' region signature appears at 237-241; the sequence is KLSKR. K240 is an ATP binding site.

The protein belongs to the class-I aminoacyl-tRNA synthetase family. Glutamate--tRNA ligase type 1 subfamily. In terms of assembly, monomer.

The protein resides in the cytoplasm. The enzyme catalyses tRNA(Glu) + L-glutamate + ATP = L-glutamyl-tRNA(Glu) + AMP + diphosphate. Catalyzes the attachment of glutamate to tRNA(Glu) in a two-step reaction: glutamate is first activated by ATP to form Glu-AMP and then transferred to the acceptor end of tRNA(Glu). In Xylella fastidiosa (strain M23), this protein is Glutamate--tRNA ligase.